Here is a 248-residue protein sequence, read N- to C-terminus: Small ribosomal subunit protein uS3 (248 aa).

One can recognise a KH type-2 domain in the interval Ile-39–Arg-107. Positions Ala-214–Ala-248 are disordered. The span at Pro-232–Ala-248 shows a compositional bias: basic and acidic residues.

It belongs to the universal ribosomal protein uS3 family. Part of the 30S ribosomal subunit. Forms a tight complex with proteins S10 and S14.

Binds the lower part of the 30S subunit head. Binds mRNA in the 70S ribosome, positioning it for translation. The sequence is that of Small ribosomal subunit protein uS3 from Azorhizobium caulinodans (strain ATCC 43989 / DSM 5975 / JCM 20966 / LMG 6465 / NBRC 14845 / NCIMB 13405 / ORS 571).